The primary structure comprises 270 residues: Formamidopyrimidine-DNA glycosylase (270 aa).

Pro2 serves as the catalytic Schiff-base intermediate with DNA. Glu3 (proton donor) is an active-site residue. Lys58 (proton donor; for beta-elimination activity) is an active-site residue. Residues His91, Arg110, and Arg151 each contribute to the DNA site. Residues 236–270 form an FPG-type zinc finger; sequence FAYGRAGEFCKVCGTTLREVKLGQRASVYCPRCQR. Arg260 functions as the Proton donor; for delta-elimination activity in the catalytic mechanism.

The protein belongs to the FPG family. As to quaternary structure, monomer. Requires Zn(2+) as cofactor.

The catalysed reaction is Hydrolysis of DNA containing ring-opened 7-methylguanine residues, releasing 2,6-diamino-4-hydroxy-5-(N-methyl)formamidopyrimidine.. The enzyme catalyses 2'-deoxyribonucleotide-(2'-deoxyribose 5'-phosphate)-2'-deoxyribonucleotide-DNA = a 3'-end 2'-deoxyribonucleotide-(2,3-dehydro-2,3-deoxyribose 5'-phosphate)-DNA + a 5'-end 5'-phospho-2'-deoxyribonucleoside-DNA + H(+). Functionally, involved in base excision repair of DNA damaged by oxidation or by mutagenic agents. Acts as a DNA glycosylase that recognizes and removes damaged bases. Has a preference for oxidized purines, such as 7,8-dihydro-8-oxoguanine (8-oxoG). Has AP (apurinic/apyrimidinic) lyase activity and introduces nicks in the DNA strand. Cleaves the DNA backbone by beta-delta elimination to generate a single-strand break at the site of the removed base with both 3'- and 5'-phosphates. The sequence is that of Formamidopyrimidine-DNA glycosylase from Ectopseudomonas mendocina (strain ymp) (Pseudomonas mendocina).